Here is a 436-residue protein sequence, read N- to C-terminus: Trigger factor (436 aa).

The PPIase FKBP-type domain maps to 164–249; the sequence is GDTVVIDFEG…IHEVKTKELP (86 aa).

The protein belongs to the FKBP-type PPIase family. Tig subfamily.

It localises to the cytoplasm. It carries out the reaction [protein]-peptidylproline (omega=180) = [protein]-peptidylproline (omega=0). Functionally, involved in protein export. Acts as a chaperone by maintaining the newly synthesized protein in an open conformation. Functions as a peptidyl-prolyl cis-trans isomerase. The sequence is that of Trigger factor from Ligilactobacillus salivarius (strain UCC118) (Lactobacillus salivarius).